We begin with the raw amino-acid sequence, 73 residues long: U3-agatoxin-Ao1i (73 aa).

An N-terminal signal peptide occupies residues 1-20 (MRTIISLLLLSAMVFAEIEA). Positions 21–34 (ISLEEGLQLFEGER) are excised as a propeptide. 4 disulfides stabilise this stretch: C36–C52, C43–C57, C51–C67, and C59–C65. A Serine amide modification is found at S71.

Belongs to the neurotoxin 07 (Beta/delta-agtx) family. 03 (aga-4) subfamily. Aga sub-subfamily. Expressed by the venom gland.

Its subcellular location is the secreted. Insecticidal neurotoxin that induces an irreversible spastic paralysis when injected into insects. Modifies presynaptic voltage-gated sodium channels (Nav), causing them to open at the normal resting potential of the nerve. This leads to spontaneous release of neurotransmitter and repetitive action potentials in motor neurons. The chain is U3-agatoxin-Ao1i from Agelena orientalis (Funnel-web spider).